Here is a 409-residue protein sequence, read N- to C-terminus: Argininosuccinate synthase (409 aa).

ATP contacts are provided by residues 10–18 (AYSGGLDTS) and Ala37. Residues Tyr90 and Ser95 each contribute to the L-citrulline site. ATP is bound at residue Gly120. The L-aspartate site is built by Thr122, Asn126, and Asp127. Residue Asn126 participates in L-citrulline binding. L-citrulline contacts are provided by Arg130, Ser182, Ser191, Glu267, and Tyr279.

Belongs to the argininosuccinate synthase family. Type 1 subfamily. In terms of assembly, homotetramer.

It localises to the cytoplasm. The enzyme catalyses L-citrulline + L-aspartate + ATP = 2-(N(omega)-L-arginino)succinate + AMP + diphosphate + H(+). Its pathway is amino-acid biosynthesis; L-arginine biosynthesis; L-arginine from L-ornithine and carbamoyl phosphate: step 2/3. In Aromatoleum aromaticum (strain DSM 19018 / LMG 30748 / EbN1) (Azoarcus sp. (strain EbN1)), this protein is Argininosuccinate synthase.